The sequence spans 253 residues: 5'/3'-nucleotidase SurE (253 aa).

The a divalent metal cation site is built by D8, D9, S39, and N92.

This sequence belongs to the SurE nucleotidase family. It depends on a divalent metal cation as a cofactor.

It localises to the cytoplasm. It carries out the reaction a ribonucleoside 5'-phosphate + H2O = a ribonucleoside + phosphate. It catalyses the reaction a ribonucleoside 3'-phosphate + H2O = a ribonucleoside + phosphate. The enzyme catalyses [phosphate](n) + H2O = [phosphate](n-1) + phosphate + H(+). Nucleotidase with a broad substrate specificity as it can dephosphorylate various ribo- and deoxyribonucleoside 5'-monophosphates and ribonucleoside 3'-monophosphates with highest affinity to 3'-AMP. Also hydrolyzes polyphosphate (exopolyphosphatase activity) with the preference for short-chain-length substrates (P20-25). Might be involved in the regulation of dNTP and NTP pools, and in the turnover of 3'-mononucleotides produced by numerous intracellular RNases (T1, T2, and F) during the degradation of various RNAs. The polypeptide is 5'/3'-nucleotidase SurE (Enterobacter sp. (strain 638)).